Reading from the N-terminus, the 220-residue chain is Nicotinamidase (220 aa).

Asp11 is an active-site residue. Asp53, His55, and His94 together coordinate Zn(2+). The active site involves Lys119. The active-site Nucleophile is the Cys163.

This sequence belongs to the isochorismatase family.

The protein localises to the cytoplasm. It is found in the nucleus. It localises to the peroxisome. It carries out the reaction nicotinamide + H2O = nicotinate + NH4(+). Its pathway is cofactor biosynthesis; nicotinate biosynthesis; nicotinate from nicotinamide: step 1/1. Functionally, catalyzes the deamidation of nicotinamide, an early step in the NAD(+) salvage pathway. The chain is Nicotinamidase (pnc1) from Schizosaccharomyces pombe (strain 972 / ATCC 24843) (Fission yeast).